A 239-amino-acid chain; its full sequence is Small ribosomal subunit protein uS2 (239 aa).

The protein belongs to the universal ribosomal protein uS2 family.

The protein is Small ribosomal subunit protein uS2 of Parasynechococcus marenigrum (strain WH8102).